Consider the following 377-residue polypeptide: Chaperone protein DnaJ (377 aa).

One can recognise a J domain in the interval 4–69 (DYYEALGVER…QKRAAYDRFG (66 aa)). The segment at 135-213 (GKTAQIRVPT…CHGQGRVTQE (79 aa)) adopts a CR-type zinc-finger fold. Positions 148, 151, 165, 168, 187, 190, 201, and 204 each coordinate Zn(2+). 4 CXXCXGXG motif repeats span residues 148 to 155 (CDECSGSG), 165 to 172 (CTMCSGSG), 187 to 194 (CPTCNGRG), and 201 to 208 (CGKCHGQG).

Belongs to the DnaJ family. In terms of assembly, homodimer. Zn(2+) is required as a cofactor.

The protein resides in the cytoplasm. Its function is as follows. Participates actively in the response to hyperosmotic and heat shock by preventing the aggregation of stress-denatured proteins and by disaggregating proteins, also in an autonomous, DnaK-independent fashion. Unfolded proteins bind initially to DnaJ; upon interaction with the DnaJ-bound protein, DnaK hydrolyzes its bound ATP, resulting in the formation of a stable complex. GrpE releases ADP from DnaK; ATP binding to DnaK triggers the release of the substrate protein, thus completing the reaction cycle. Several rounds of ATP-dependent interactions between DnaJ, DnaK and GrpE are required for fully efficient folding. Also involved, together with DnaK and GrpE, in the DNA replication of plasmids through activation of initiation proteins. This chain is Chaperone protein DnaJ, found in Brucella anthropi (strain ATCC 49188 / DSM 6882 / CCUG 24695 / JCM 21032 / LMG 3331 / NBRC 15819 / NCTC 12168 / Alc 37) (Ochrobactrum anthropi).